A 1358-amino-acid polypeptide reads, in one-letter code: Xanthine dehydrogenase (1358 aa).

Positions Asn18–Leu107 constitute a 2Fe-2S ferredoxin-type domain. Residues Cys56, Cys61, Cys64, Cys89, Cys129, Cys132, Cys164, and Cys166 each coordinate [2Fe-2S] cluster. Residues Phe253–Pro447 enclose the FAD-binding PCMH-type domain. Residues Ile281 to Ile288, Phe366, Ser376 to Asn380, Asp389, Leu437, and Lys455 each bind FAD. Gln805 and Phe836 together coordinate Mo-molybdopterin. The substrate site is built by Glu840 and Arg918. Arg950 is a Mo-molybdopterin binding site. 2 residues coordinate substrate: Tyr952 and Thr1048. Ala1117 lines the Mo-molybdopterin pocket. The active-site Proton acceptor is Glu1302.

It belongs to the xanthine dehydrogenase family. In terms of assembly, homodimer. FAD serves as cofactor. Mo-molybdopterin is required as a cofactor. Requires [2Fe-2S] cluster as cofactor.

It localises to the peroxisome. The enzyme catalyses xanthine + NAD(+) + H2O = urate + NADH + H(+). It catalyses the reaction hypoxanthine + NAD(+) + H2O = xanthine + NADH + H(+). In terms of biological role, key enzyme in purine degradation. Catalyzes the oxidation of hypoxanthine to xanthine. Catalyzes the oxidation of xanthine to uric acid. The chain is Xanthine dehydrogenase (xdh) from Dictyostelium discoideum (Social amoeba).